The primary structure comprises 262 residues: Acyl-[acyl-carrier-protein]--UDP-N-acetylglucosamine O-acyltransferase (262 aa).

It belongs to the transferase hexapeptide repeat family. LpxA subfamily. In terms of assembly, homotrimer.

The protein resides in the cytoplasm. It carries out the reaction a (3R)-hydroxyacyl-[ACP] + UDP-N-acetyl-alpha-D-glucosamine = a UDP-3-O-[(3R)-3-hydroxyacyl]-N-acetyl-alpha-D-glucosamine + holo-[ACP]. The protein operates within glycolipid biosynthesis; lipid IV(A) biosynthesis; lipid IV(A) from (3R)-3-hydroxytetradecanoyl-[acyl-carrier-protein] and UDP-N-acetyl-alpha-D-glucosamine: step 1/6. Involved in the biosynthesis of lipid A, a phosphorylated glycolipid that anchors the lipopolysaccharide to the outer membrane of the cell. The protein is Acyl-[acyl-carrier-protein]--UDP-N-acetylglucosamine O-acyltransferase of Vibrio cholerae serotype O1 (strain ATCC 39541 / Classical Ogawa 395 / O395).